Reading from the N-terminus, the 181-residue chain is Probable chemoreceptor glutamine deamidase CheD (181 aa).

The protein belongs to the CheD family.

The catalysed reaction is L-glutaminyl-[protein] + H2O = L-glutamyl-[protein] + NH4(+). Its function is as follows. Probably deamidates glutamine residues to glutamate on methyl-accepting chemotaxis receptors (MCPs), playing an important role in chemotaxis. This Agrobacterium fabrum (strain C58 / ATCC 33970) (Agrobacterium tumefaciens (strain C58)) protein is Probable chemoreceptor glutamine deamidase CheD.